A 285-amino-acid polypeptide reads, in one-letter code: (3S)-malyl-CoA thioesterase (285 aa).

Substrate contacts are provided by Arg70 and Glu122. 2 residues coordinate Mg(2+): Glu122 and Asp148.

It belongs to the HpcH/HpaI aldolase family. In terms of assembly, homodimer or homotrimer. Mg(2+) is required as a cofactor.

The catalysed reaction is (S)-malyl-CoA + H2O = (S)-malate + CoA + H(+). Reversibly inhibited by EDTA. Stimulated by the divalent cations Mg(2+) and Mn(2+). Functionally, catalyzes the hydrolysis of (3S)-malyl-CoA to (3S)-malate and free CoA. Inactive towards beta-methylmalyl-CoA and other CoA esters. The chain is (3S)-malyl-CoA thioesterase from Cereibacter sphaeroides (strain ATCC 17023 / DSM 158 / JCM 6121 / CCUG 31486 / LMG 2827 / NBRC 12203 / NCIMB 8253 / ATH 2.4.1.) (Rhodobacter sphaeroides).